The primary structure comprises 337 residues: Phenylalanine--tRNA ligase alpha subunit (337 aa).

Glutamate 258 is a binding site for Mg(2+).

This sequence belongs to the class-II aminoacyl-tRNA synthetase family. Phe-tRNA synthetase alpha subunit type 1 subfamily. As to quaternary structure, tetramer of two alpha and two beta subunits. Requires Mg(2+) as cofactor.

It is found in the cytoplasm. The catalysed reaction is tRNA(Phe) + L-phenylalanine + ATP = L-phenylalanyl-tRNA(Phe) + AMP + diphosphate + H(+). The sequence is that of Phenylalanine--tRNA ligase alpha subunit from Burkholderia cenocepacia (strain ATCC BAA-245 / DSM 16553 / LMG 16656 / NCTC 13227 / J2315 / CF5610) (Burkholderia cepacia (strain J2315)).